A 276-amino-acid polypeptide reads, in one-letter code: Putative pyridoxine kinase (276 aa).

Asn-139 contributes to the ATP binding site. Glu-142 contacts Mg(2+). ATP-binding positions include 176–180, Asp-188, Gly-213, and Lys-238; that span reads KGGKA.

Belongs to the ThiD family.

It catalyses the reaction pyridoxal + ATP = pyridoxal 5'-phosphate + ADP + H(+). Its function is as follows. Phosphorylates B6 vitamers; functions in a salvage pathway. Uses pyridoxal, pyridoxine, and pyridoxamine as substrates. The sequence is that of Putative pyridoxine kinase (pdxK) from Staphylococcus epidermidis (strain ATCC 35984 / DSM 28319 / BCRC 17069 / CCUG 31568 / BM 3577 / RP62A).